The chain runs to 244 residues: Adiponectin (244 aa).

The first 18 residues, Met-1–Gln-18, serve as a signal peptide directing secretion. O-linked (GalNAc...) threonine glycosylation is found at Thr-21 and Thr-22. Lys-33 carries the 5-hydroxylysine modification. Position 36 is an S-(2-succinyl)cysteine (Cys-36). The disordered stretch occupies residues Met-40 to Lys-101. A Collagen-like domain is found at Gly-42–Gly-107. 3 positions are modified to 4-hydroxyproline: Pro-44, Pro-47, and Pro-53. Positions Arg-55–Asp-70 are enriched in basic and acidic residues. Residues Lys-65 and Lys-68 each carry the 5-hydroxylysine modification. O-linked (Gal...) hydroxylysine; partial glycosylation is found at Lys-65 and Lys-68. 4-hydroxyproline; partial occurs at positions 71 and 76. At Lys-77 the chain carries 5-hydroxylysine. Lys-77 carries O-linked (Gal...) hydroxylysine; partial glycosylation. Pro-91 carries the post-translational modification 4-hydroxyproline. Pro-95 bears the 4-hydroxyproline; partial mark. At Lys-101 the chain carries 5-hydroxylysine. A glycan (O-linked (Gal...) hydroxylysine; partial) is linked at Lys-101. The C1q domain occupies Ala-108 to Asn-244.

In terms of assembly, homomultimer. Forms trimers, hexamers and 12- to 18-mers. The trimers (low molecular weight complexes / LMW) are assembled via non-covalent interactions of the collagen-like domains in a triple helix and hydrophobic interactions within the globular C1q domain. Several trimers can associate to form disulfide-linked hexamers (middle molecular weight complexes / MMW) and larger complexes (higher molecular weight / HMW). The HMW-complex assembly is also modulated by the degree of lysine hydroxylation and glycosylation. LMW, MMW and HMW complexes bind to HBEGF, MMW and HMW complexes bind to PDGFB, and HMW complex binds to FGF2. Interacts with CTRP9 via the C1q domain (heterotrimeric complex). In terms of processing, HMW complexes are more extensively glycosylated than smaller oligomers. Hydroxylation and glycosylation of the lysine residues within the collagen-like domain of adiponectin seem to be critically involved in regulating the formation and/or secretion of HMW complexes and consequently contribute to the insulin-sensitizing activity of adiponectin in hepatocytes. Post-translationally, O-glycosylated. Not N-glycosylated. O-linked glycans on hydroxylysines consist of Glc-Gal disaccharides bound to the oxygen atom of post-translationally added hydroxyl groups. Sialylated to varying degrees depending on tissue. Thr-22 appears to be the major site of sialylation. Higher sialylation found in SGBS adipocytes than in HEK fibroblasts. Sialylation is not required neither for heterodimerization nor for secretion. Not sialylated on the glycosylated hydroxylysines. Desialylated forms are rapidly cleared from the circulation. Succination of Cys-36 by the Krebs cycle intermediate fumarate, which leads to S-(2-succinyl)cysteine residues, inhibits polymerization and secretion of adiponectin. Adiponectin is a major target for succination in both adipocytes and adipose tissue of diabetic mammals. It was proposed that succination of proteins is a biomarker of mitochondrial stress and accumulation of Krebs cycle intermediates in adipose tissue in diabetes and that succination of adiponectin may contribute to the decrease in plasma adiponectin in diabetes. As to expression, synthesized exclusively by adipocytes and secreted into plasma.

The protein resides in the secreted. With respect to regulation, polymerization and secretion of adiponectin is inhibited by succination of cysteine residues by the Krebs cycle intermediate fumarate, which leads to S-(2-succinyl)cysteine residues. Its function is as follows. Important adipokine involved in the control of fat metabolism and insulin sensitivity, with direct anti-diabetic, anti-atherogenic and anti-inflammatory activities. Stimulates AMPK phosphorylation and activation in the liver and the skeletal muscle, enhancing glucose utilization and fatty-acid combustion. Antagonizes TNF-alpha by negatively regulating its expression in various tissues such as liver and macrophages, and also by counteracting its effects. Inhibits endothelial NF-kappa-B signaling through a cAMP-dependent pathway. May play a role in cell growth, angiogenesis and tissue remodeling by binding and sequestering various growth factors with distinct binding affinities, depending on the type of complex, LMW, MMW or HMW. This chain is Adiponectin (ADIPOQ), found in Homo sapiens (Human).